A 286-amino-acid polypeptide reads, in one-letter code: D-tagatose-1,6-bisphosphate aldolase subunit KbaY (286 aa).

D82 (proton donor) is an active-site residue. Zn(2+) contacts are provided by H83 and H180. G181 contributes to the dihydroxyacetone phosphate binding site. H208 is a Zn(2+) binding site. Dihydroxyacetone phosphate-binding positions include G209 to S211 and N230 to T233.

This sequence belongs to the class II fructose-bisphosphate aldolase family. TagBP aldolase KbaY subfamily. Homotetramer. Forms a complex with KbaZ. Requires Zn(2+) as cofactor.

It catalyses the reaction D-tagatofuranose 1,6-bisphosphate = D-glyceraldehyde 3-phosphate + dihydroxyacetone phosphate. It participates in carbohydrate metabolism; D-tagatose 6-phosphate degradation; D-glyceraldehyde 3-phosphate and glycerone phosphate from D-tagatose 6-phosphate: step 2/2. In terms of biological role, catalytic subunit of the tagatose-1,6-bisphosphate aldolase KbaYZ, which catalyzes the reversible aldol condensation of dihydroxyacetone phosphate (DHAP or glycerone-phosphate) with glyceraldehyde 3-phosphate (G3P) to produce tagatose 1,6-bisphosphate (TBP). Requires KbaZ subunit for full activity and stability. This is D-tagatose-1,6-bisphosphate aldolase subunit KbaY from Escherichia coli O45:K1 (strain S88 / ExPEC).